Consider the following 237-residue polypeptide: UPF0173 metal-dependent hydrolase BruAb2_0628 (237 aa).

It belongs to the UPF0173 family.

This Brucella abortus biovar 1 (strain 9-941) protein is UPF0173 metal-dependent hydrolase BruAb2_0628.